Reading from the N-terminus, the 452-residue chain is Cysteine--tRNA ligase (452 aa).

Position 27 (Cys-27) interacts with Zn(2+). A 'HIGH' region motif is present at residues 29-39 (PTVQDHFHIGH). Residues Asp-207, His-232, and Glu-236 each coordinate Zn(2+). Positions 265 to 269 (KMSKS) match the 'KMSKS' region motif. Lys-268 provides a ligand contact to ATP.

Belongs to the class-I aminoacyl-tRNA synthetase family. Zn(2+) serves as cofactor.

It localises to the cytoplasm. It carries out the reaction tRNA(Cys) + L-cysteine + ATP = L-cysteinyl-tRNA(Cys) + AMP + diphosphate. This is Cysteine--tRNA ligase from Thermoplasma acidophilum (strain ATCC 25905 / DSM 1728 / JCM 9062 / NBRC 15155 / AMRC-C165).